Here is a 585-residue protein sequence, read N- to C-terminus: Probable phosphoglucomutase, cytoplasmic 2 (585 aa).

A disordered region spans residues 1–20; the sequence is MVSFKVSLVSTSPIDGQKPG. Residues arginine 25 and serine 124 each coordinate alpha-D-glucose 1,6-bisphosphate. Catalysis depends on serine 124, which acts as the Phosphoserine intermediate. Serine 124, aspartate 301, aspartate 303, and aspartate 305 together coordinate Mg(2+). Serine 124 carries the phosphoserine modification. The alpha-D-glucose 1,6-bisphosphate site is built by aspartate 305, arginine 306, threonine 369, glutamate 388, serine 390, and lysine 401.

It belongs to the phosphohexose mutase family. As to quaternary structure, monomer. The cofactor is Mg(2+).

It localises to the cytoplasm. It carries out the reaction alpha-D-glucose 1-phosphate = alpha-D-glucose 6-phosphate. It catalyses the reaction O-phospho-L-seryl-[protein] + alpha-D-glucose 1-phosphate = alpha-D-glucose 1,6-bisphosphate + L-seryl-[protein]. The enzyme catalyses alpha-D-glucose 1,6-bisphosphate + L-seryl-[protein] = O-phospho-L-seryl-[protein] + alpha-D-glucose 6-phosphate. Catalyzes the reversible isomerization of alpha-D-glucose 1-phosphate to alpha-D-glucose 6-phosphate. The mechanism proceeds via the intermediate compound alpha-D-glucose 1,6-bisphosphate. This enzyme participates in both the breakdown and synthesis of glucose. The sequence is that of Probable phosphoglucomutase, cytoplasmic 2 from Arabidopsis thaliana (Mouse-ear cress).